The primary structure comprises 37 residues: Large ribosomal subunit protein bL36c (37 aa).

The protein belongs to the bacterial ribosomal protein bL36 family.

It is found in the plastid. It localises to the chloroplast. This chain is Large ribosomal subunit protein bL36c, found in Pleurastrum terricola (Filamentous green alga).